The sequence spans 512 residues: Amidase 2 (512 aa).

Active-site charge relay system residues include K122 and S197. Substrate is bound by residues S197 and 218-221 (IGGS). The active-site Acyl-ester intermediate is the S221.

The protein belongs to the amidase family.

It carries out the reaction a monocarboxylic acid amide + H2O = a monocarboxylate + NH4(+). It participates in xenobiotic degradation. Amidase; part of the Fusarium detoxification of benzoxazolinone cluster 2 (FDB2) involved in the degradation of benzoxazolinones produced by the host plant. Maize, wheat, and rye produce the 2 benzoxazinone phytoanticipins 2,4-dihy-droxy-7-methoxy-1,4-benzoxazin-3-one (DIMBOA) and 2,4-dihydroxy-1,4-benzoxazin-3-one (DIBOA) that, due to their inherent instability once released, spontaneously degrade to the more stable corresponding benzoxazolinones, 6-methoxy-2-benzoxazolinone (MBOA) and 2-benzoxazolinone (BOA), respectively. The first step in the detoxification of benzoxazolinones involves the hydrolysis of the cyclic ester bond of benzoxazolinones by the FDB1 cluster gamma-lactamase MBL1 to aminophenols. MBL1 is able to convert BOA into 2-aminophenol (2-AP), as well as MBOA into 5-methoxy-2-aminophenol (2-AMP). The FDB2 cluster N-malonyltransferase FDB2/NAT1 then metabolizes aminophenols via N-malonylation to non-toxic malonamic acids. FDB2/NAT1 converts 2-AP into N-(2-hydroxyphenyl) malonamic acid (HPMA) and 2-AMP into N-(2-hydroxy-4-methoxyphenyl) malonamic acid (HMPMA). The duplicated dienlactone hydrolases DLH1 and DLH2 may provide redundant function for hydrolyzing the lactone moiety in the BOA molecule. The roles of the amidases an other enzymes encoded by the 2 FDB clusters have not been identified so far. In Gibberella moniliformis (strain M3125 / FGSC 7600) (Maize ear and stalk rot fungus), this protein is Amidase 2.